The following is a 368-amino-acid chain: 3-dehydroquinate synthase (368 aa).

Residues 71–76 (DGEAAK), 105–109 (GATTD), 129–130 (TT), Lys142, and Lys151 contribute to the NAD(+) site. Residues Glu184, His247, and His263 each coordinate Zn(2+).

Belongs to the sugar phosphate cyclases superfamily. Dehydroquinate synthase family. Co(2+) is required as a cofactor. Zn(2+) serves as cofactor. The cofactor is NAD(+).

The protein resides in the cytoplasm. The catalysed reaction is 7-phospho-2-dehydro-3-deoxy-D-arabino-heptonate = 3-dehydroquinate + phosphate. The protein operates within metabolic intermediate biosynthesis; chorismate biosynthesis; chorismate from D-erythrose 4-phosphate and phosphoenolpyruvate: step 2/7. Functionally, catalyzes the conversion of 3-deoxy-D-arabino-heptulosonate 7-phosphate (DAHP) to dehydroquinate (DHQ). The polypeptide is 3-dehydroquinate synthase (Thermobifida fusca (strain YX)).